The chain runs to 1824 residues: E3 ubiquitin-protein ligase UBR1 (1824 aa).

The segment at 107–178 adopts a UBR-type zinc-finger fold; the sequence is TVCGKVFKNG…KDQYCELHLA (72 aa). Disordered stretches follow at residues 1006–1043 and 1073–1093; these read KQAPSDGRAGPSCSQQGTGGKLSLSAEEQAREERENRA and ADTENETRKESASTGPMDWED. A compositionally biased stretch (basic and acidic residues) spans 1033-1043; the sequence is EQAREERENRA. The RING-type; atypical zinc-finger motif lies at 1126–1220; it reads FKCILCFENC…VEFQCPYCRT (95 aa).

It belongs to the E3 ubiquitin-protein ligase UBR1-like family.

The catalysed reaction is S-ubiquitinyl-[E2 ubiquitin-conjugating enzyme]-L-cysteine + [acceptor protein]-L-lysine = [E2 ubiquitin-conjugating enzyme]-L-cysteine + N(6)-ubiquitinyl-[acceptor protein]-L-lysine.. The protein operates within protein modification; protein ubiquitination. E3 ubiquitin-protein ligase which is a component of the N-end rule pathway. Recognizes and binds to proteins bearing specific N-terminal residues that are destabilizing according to the N-end rule, leading to their ubiquitination and subsequent degradation. The chain is E3 ubiquitin-protein ligase UBR1 from Drosophila melanogaster (Fruit fly).